The sequence spans 300 residues: Lysophosphatidic acid:oleoyl-CoA acyltransferase 1 (300 aa).

A helical transmembrane segment spans residues 33 to 53 (LLGILGVKTIIMLPLIMLYLL). Residues 101–106 (CTSPLD) carry the HXXXXD motif motif.

This sequence belongs to the 1-acyl-sn-glycerol-3-phosphate acyltransferase family.

It is found in the lipid droplet. It localises to the endoplasmic reticulum membrane. The enzyme catalyses a 1-acyl-sn-glycero-3-phosphate + an acyl-CoA = a 1,2-diacyl-sn-glycero-3-phosphate + CoA. The catalysed reaction is 1-hexadecanoyl-sn-glycero-3-phosphate + (9Z)-octadecenoyl-CoA = 1-hexadecanoyl-2-(9Z-octadecenoyl)-sn-glycero-3-phosphate + CoA. Acyl-CoA-dependent lysophosphatidic acid acyltransferase with preference for oleoyl-CoA. Involved in triacylglyceride homeostasis and lipid droplet formation. Involved in vacuolar protein sorting. In Saccharomyces cerevisiae (strain ATCC 204508 / S288c) (Baker's yeast), this protein is Lysophosphatidic acid:oleoyl-CoA acyltransferase 1.